Reading from the N-terminus, the 143-residue chain is uncharacterized protein (143 aa).

It localises to the cytoplasm. Its subcellular location is the nucleus. This is an uncharacterized protein from Schizosaccharomyces pombe (strain 972 / ATCC 24843) (Fission yeast).